The following is an 83-amino-acid chain: Vitellogenesis-inhibiting hormone (83 aa).

Intrachain disulfides connect Cys15/Cys52, Cys32/Cys48, and Cys35/Cys61.

In terms of tissue distribution, found in the sinus glands of both male and female. Found also in the brain; the neuroendocrine structures of the protocerebrum.

The protein localises to the secreted. Inhibits secondary vitellogenesis in females. Has no hyperglycemic or molt-inhibiting activity. The sequence is that of Vitellogenesis-inhibiting hormone from Armadillidium vulgare (Pillbug).